Here is a 148-residue protein sequence, read N- to C-terminus: Deoxyuridine 5'-triphosphate nucleotidohydrolase (148 aa).

Substrate is bound by residues 67–69 (RSG), Asn80, 84–86 (LID), and Met94.

This sequence belongs to the dUTPase family. Mg(2+) serves as cofactor.

The enzyme catalyses dUTP + H2O = dUMP + diphosphate + H(+). The protein operates within pyrimidine metabolism; dUMP biosynthesis; dUMP from dCTP (dUTP route): step 2/2. Functionally, this enzyme is involved in nucleotide metabolism: it produces dUMP, the immediate precursor of thymidine nucleotides and it decreases the intracellular concentration of dUTP so that uracil cannot be incorporated into DNA. This chain is Deoxyuridine 5'-triphosphate nucleotidohydrolase, found in Paraburkholderia phymatum (strain DSM 17167 / CIP 108236 / LMG 21445 / STM815) (Burkholderia phymatum).